An 852-amino-acid chain; its full sequence is Disrupted in schizophrenia 1 homolog (852 aa).

Disordered stretches follow at residues 1–86, 236–264, and 280–320; these read MQGG…GLDP, EAEP…PRHL, and QVTR…QGGG. The interval 1 to 294 is interaction with MAP1A; it reads MQGGGPRGAP…SSRQSECGTV (294 aa). The span at 65–79 shows a compositional bias: polar residues; sequence AGLTGQQSQHSQSKA. A compositionally biased stretch (basic and acidic residues) spans 253–263; it reads SSDRPHGDPRH. Residues 288-311 show a composition bias toward low complexity; it reads QSECGTVSSSSSDTGFSSQDASSA. Residues 295–693 form an interaction with TRAF3IP1 region; that stretch reads SSSSSDTGFS…LGRVWKADLE (399 aa). 2 coiled-coil regions span residues 367–397 and 449–496; these read EDGD…ALPS and ITRR…LLRW. The interval 437 to 594 is required for localization to punctate cytoplasmic foci; it reads LRTTAQDSLP…LLEAKMLALS (158 aa). A necessary and sufficient for interaction with PCNT and localization at the centrosome region spans residues 443 to 852; that stretch reads DSLPASITRR…PTAGAQETEA (410 aa). Residues 595 to 852 are interaction with ATF4 and ATF5; that stretch reads GSCFSTAKEL…PTAGAQETEA (258 aa). Disordered stretches follow at residues 706–746 and 833–852; these read EAGS…KSPL and KEAG…ETEA. The segment at 728–852 is interaction with NDEL1 and PAFAH1B1; the sequence is TAALAVPRTP…PTAGAQETEA (125 aa). An interaction with PAFAH1B1 region spans residues 728-852; the sequence is TAALAVPRTP…PTAGAQETEA (125 aa). Residues 802-835 are interaction with NDEL1; it reads SHDEALFQSLQGELQTVKETLQAMILQLQPTKEA.

In terms of assembly, interacts with NDEL1. Interacts with CCDC88A (via C-terminus); the interaction is direct. Interacts with GSK3B. Interacts with tubulin alpha, ACTN2, ANKHD1, ATF4, ATF5, CEP63, EIF3S3, MAP1A, NDEL1, PAFAH1B1, RANBP9, SPTBN4, SYNE1 and TRAF3IP1. Interaction with microtubules may be mediated in part by TRAF3IP1. Interacts (via C-terminal) with PCNT. Interacts with CHCHD6. Interacts with CCDC141. Interacts with FBXW7, the substrate-recognition component of a SCF (SKP1-CUL1-F-box protein) E3 ubiquitin-protein ligase complex; the interaction targets DISC1 for proteasomal degradation. Interacts with ZNF365. Interacts with ATF4; inhibiting ATF4 transcription factor activity by disrupting ATF4 dimerization and DNA-binding. Interacts with PDE4B. Ubiquitinated. Ubiquitination with 'Lys-48'-linked polyubiquitin chains leads to its proteasomal degradation. Expressed in granule cell precursors within the dentate migratory stream during the first week of postnatal life and in differentiated granule cells of the hippocampus (at protein level). Detected in heart, brain, kidney, and testis. Expressed in dentate gyrus, hippocampus and in the olfactory bulb.

It localises to the cytoplasm. It is found in the cytoskeleton. The protein localises to the mitochondrion. The protein resides in the microtubule organizing center. Its subcellular location is the centrosome. It localises to the postsynaptic density. Involved in the regulation of multiple aspects of embryonic and adult neurogenesis. Required for neural progenitor proliferation in the ventrical/subventrical zone during embryonic brain development and in the adult dentate gyrus of the hippocampus. Participates in the Wnt-mediated neural progenitor proliferation as a positive regulator by modulating GSK3B activity and CTNNB1 abundance. Plays a role as a modulator of the AKT-mTOR signaling pathway controlling the tempo of the process of newborn neurons integration during adult neurogenesis, including neuron positioning, dendritic development and synapse formation. Inhibits the activation of AKT-mTOR signaling upon interaction with CCDC88A. Regulates the migration of early-born granule cell precursors toward the dentate gyrus during the hippocampal development. Inhibits ATF4 transcription factor activity in neurons by disrupting ATF4 dimerization and DNA-binding. Plays a role, together with PCNT, in the microtubule network formation. The protein is Disrupted in schizophrenia 1 homolog of Mus musculus (Mouse).